A 627-amino-acid chain; its full sequence is Membrane protein insertase YidC (627 aa).

The chain crosses the membrane as a helical span at residues 8–28 (LFLALILSMGIWMGVNYFFFP). Residues 33–57 (KKNTETKQTQSDKTSENTKQQITSG) are compositionally biased toward polar residues. Residues 33–68 (KKNTETKQTQSDKTSENTKQQITSGKTKESNSADPV) form a disordered region. Positions 58 to 68 (KTKESNSADPV) are enriched in basic and acidic residues. Transmembrane regions (helical) follow at residues 417–437 (FTIPNYGWSIIIFAILFKLVF), 488–508 (VGGCLPMVIQIPIFIALYTAF), 536–556 (AIPYFTQTGIGLNLLALLMVG), and 575–595 (MLMYVMPVMMLYIFWNMPSGV).

This sequence belongs to the OXA1/ALB3/YidC family. Type 1 subfamily. As to quaternary structure, interacts with the Sec translocase complex via SecD. Specifically interacts with transmembrane segments of nascent integral membrane proteins during membrane integration.

It localises to the cell inner membrane. Its function is as follows. Required for the insertion and/or proper folding and/or complex formation of integral membrane proteins into the membrane. Involved in integration of membrane proteins that insert both dependently and independently of the Sec translocase complex, as well as at least some lipoproteins. Aids folding of multispanning membrane proteins. In Leptospira interrogans serogroup Icterohaemorrhagiae serovar Lai (strain 56601), this protein is Membrane protein insertase YidC.